Reading from the N-terminus, the 375-residue chain is Naringenin 7-O-methyltransferase (375 aa).

Leu-136–Phe-142 contributes to the substrate binding site. Residues Leu-168–Met-188 are substrate binding. Residues Gly-219, Asp-242, Met-263, and Lys-276 each coordinate S-adenosyl-L-methionine. His-280 (proton acceptor) is an active-site residue.

Belongs to the class I-like SAM-binding methyltransferase superfamily. Cation-independent O-methyltransferase family. COMT subfamily.

It carries out the reaction (2S)-naringenin + S-adenosyl-L-methionine = (2S)-sakuranetin + S-adenosyl-L-homocysteine + H(+). Functionally, S-adenosyl-L-methionine-dependent methyltransferase involved in the biosynthesis of the sakuranetin, an inducible defense mechanism of O.sativa against pathogen attack. This chain is Naringenin 7-O-methyltransferase, found in Oryza sativa subsp. japonica (Rice).